Consider the following 214-residue polypeptide: Dephospho-CoA kinase (214 aa).

The 200-residue stretch at 3–202 (KIGLTGGIGS…DRWLALAGAA (200 aa)) folds into the DPCK domain. 11–16 (GSGKSR) lines the ATP pocket.

Belongs to the CoaE family.

Its subcellular location is the cytoplasm. The catalysed reaction is 3'-dephospho-CoA + ATP = ADP + CoA + H(+). Its pathway is cofactor biosynthesis; coenzyme A biosynthesis; CoA from (R)-pantothenate: step 5/5. Its function is as follows. Catalyzes the phosphorylation of the 3'-hydroxyl group of dephosphocoenzyme A to form coenzyme A. This Bordetella bronchiseptica (strain ATCC BAA-588 / NCTC 13252 / RB50) (Alcaligenes bronchisepticus) protein is Dephospho-CoA kinase.